The primary structure comprises 201 residues: L-rhamnose-binding lectin SML (201 aa).

8 cysteine pairs are disulfide-bonded: C10–C40, C20–C99, C54–C86, C67–C73, C108–C138, C117–C195, C152–C182, and C163–C169. SUEL-type lectin domains lie at 18-100 (LSCD…YNCF) and 107-196 (TCEH…YVCQ). The N-linked (GlcNAc...) asparagine glycan is linked to N168.

As to quaternary structure, homodimer; non-covalently linked.

Its function is as follows. Rhamnose-binding lectin. Also binds melibiose, raffinose, D-galactose, L-arabinose, D-fucose, maltose and D-glucose with decreasing affinity. Does not bind D-arabinose, L-fucose, lactose, xylose or 2-deoxy-D-galactose. Shows strong hemagglutinating activity against rabbit erythrocytes. The protein is L-rhamnose-binding lectin SML of Scomberomorus niphonius (Japanese Spanish mackerel).